The primary structure comprises 276 residues: SF-assemblin (276 aa).

Residues 1 to 31 (MSLRPFETPGGLSSLSPRRRDFSPTRPGTNG) are nonhelical region. Residues 1–37 (MSLRPFETPGGLSSLSPRRRDFSPTRPGTNGPSAKLE) form a disordered region. Positions 32–276 (PSAKLEHVTE…LQEGLKLVSA (245 aa)) are rod. Positions 67–145 (LLQESLQRIE…LVRDERESRR (79 aa)) form a coiled coil.

This sequence belongs to the SF-assemblin family.

The protein localises to the cytoplasm. Its subcellular location is the cytoskeleton. In terms of biological role, major component of the striated microtubule-associated fibers (SMAFs; system-I-fibers). The chain is SF-assemblin from Chlamydomonas reinhardtii (Chlamydomonas smithii).